The chain runs to 254 residues: Large ribosomal subunit protein uL4 (254 aa).

Belongs to the universal ribosomal protein uL4 family. As to quaternary structure, part of the 50S ribosomal subunit.

Its function is as follows. One of the primary rRNA binding proteins, this protein initially binds near the 5'-end of the 23S rRNA. It is important during the early stages of 50S assembly. It makes multiple contacts with different domains of the 23S rRNA in the assembled 50S subunit and ribosome. Forms part of the polypeptide exit tunnel. In Methanothermobacter thermautotrophicus (strain ATCC 29096 / DSM 1053 / JCM 10044 / NBRC 100330 / Delta H) (Methanobacterium thermoautotrophicum), this protein is Large ribosomal subunit protein uL4.